The sequence spans 280 residues: tRNA dimethylallyltransferase (280 aa).

9–16 is an ATP binding site; sequence GPTGSGKT. 11–16 is a binding site for substrate; the sequence is TGSGKT. The tract at residues 34–37 is interaction with substrate tRNA; that stretch reads DSVS.

The protein belongs to the IPP transferase family. In terms of assembly, monomer. The cofactor is Mg(2+).

The enzyme catalyses adenosine(37) in tRNA + dimethylallyl diphosphate = N(6)-dimethylallyladenosine(37) in tRNA + diphosphate. Functionally, catalyzes the transfer of a dimethylallyl group onto the adenine at position 37 in tRNAs that read codons beginning with uridine, leading to the formation of N6-(dimethylallyl)adenosine (i(6)A). This is tRNA dimethylallyltransferase from Acholeplasma laidlawii (strain PG-8A).